The chain runs to 209 residues: Large ribosomal subunit protein uL3 (209 aa).

The interval 144-165 (GSMGAASDPSRTFKNKKMPGHM) is disordered.

The protein belongs to the universal ribosomal protein uL3 family. Part of the 50S ribosomal subunit. Forms a cluster with proteins L14 and L19.

In terms of biological role, one of the primary rRNA binding proteins, it binds directly near the 3'-end of the 23S rRNA, where it nucleates assembly of the 50S subunit. This is Large ribosomal subunit protein uL3 from Clostridium novyi (strain NT).